Consider the following 417-residue polypeptide: NADH-quinone oxidoreductase subunit D (417 aa).

Belongs to the complex I 49 kDa subunit family. NDH-1 is composed of 14 different subunits. Subunits NuoB, C, D, E, F, and G constitute the peripheral sector of the complex.

The protein localises to the cell inner membrane. It carries out the reaction a quinone + NADH + 5 H(+)(in) = a quinol + NAD(+) + 4 H(+)(out). Functionally, NDH-1 shuttles electrons from NADH, via FMN and iron-sulfur (Fe-S) centers, to quinones in the respiratory chain. The immediate electron acceptor for the enzyme in this species is believed to be ubiquinone. Couples the redox reaction to proton translocation (for every two electrons transferred, four hydrogen ions are translocated across the cytoplasmic membrane), and thus conserves the redox energy in a proton gradient. The sequence is that of NADH-quinone oxidoreductase subunit D from Nitrosococcus oceani (strain ATCC 19707 / BCRC 17464 / JCM 30415 / NCIMB 11848 / C-107).